A 26-amino-acid chain; its full sequence is MRLKELFDAQMEYFGEVFEKTEWPYW.

This is an uncharacterized protein from Archaeoglobus fulgidus (strain ATCC 49558 / DSM 4304 / JCM 9628 / NBRC 100126 / VC-16).